Here is a 427-residue protein sequence, read N- to C-terminus: Adenylosuccinate synthetase (427 aa).

Residues Gly-12 to Lys-18 and Gly-40 to Thr-42 contribute to the GTP site. The active-site Proton acceptor is the Asp-13. Asp-13 and Gly-40 together coordinate Mg(2+). IMP is bound by residues Asp-13–Lys-16, Asn-38–His-41, Thr-128, Arg-142, Gln-223, Thr-238, and Arg-302. Catalysis depends on His-41, which acts as the Proton donor. Thr-298–Arg-304 serves as a coordination point for substrate. Residues Arg-304, Lys-330 to Asp-332, and Gly-412 to Gly-414 each bind GTP.

It belongs to the adenylosuccinate synthetase family. In terms of assembly, homodimer. Mg(2+) serves as cofactor.

The protein localises to the cytoplasm. It carries out the reaction IMP + L-aspartate + GTP = N(6)-(1,2-dicarboxyethyl)-AMP + GDP + phosphate + 2 H(+). Its pathway is purine metabolism; AMP biosynthesis via de novo pathway; AMP from IMP: step 1/2. Plays an important role in the de novo pathway of purine nucleotide biosynthesis. Catalyzes the first committed step in the biosynthesis of AMP from IMP. The chain is Adenylosuccinate synthetase from Thermobifida fusca (strain YX).